We begin with the raw amino-acid sequence, 129 residues long: Phosphoribosyl-AMP cyclohydrolase (129 aa).

Asp-76 serves as a coordination point for Mg(2+). Cys-77 lines the Zn(2+) pocket. Mg(2+) contacts are provided by Asp-78 and Asp-80. Cys-97 and Cys-104 together coordinate Zn(2+).

This sequence belongs to the PRA-CH family. As to quaternary structure, homodimer. Mg(2+) is required as a cofactor. Zn(2+) serves as cofactor.

The protein localises to the cytoplasm. It catalyses the reaction 1-(5-phospho-beta-D-ribosyl)-5'-AMP + H2O = 1-(5-phospho-beta-D-ribosyl)-5-[(5-phospho-beta-D-ribosylamino)methylideneamino]imidazole-4-carboxamide. It participates in amino-acid biosynthesis; L-histidine biosynthesis; L-histidine from 5-phospho-alpha-D-ribose 1-diphosphate: step 3/9. Functionally, catalyzes the hydrolysis of the adenine ring of phosphoribosyl-AMP. The protein is Phosphoribosyl-AMP cyclohydrolase of Polaromonas naphthalenivorans (strain CJ2).